Reading from the N-terminus, the 286-residue chain is UDP-3-O-acyl-N-acetylglucosamine deacetylase (286 aa).

Zn(2+)-binding residues include H79, H237, and D241. Residue H264 is the Proton donor of the active site.

The protein belongs to the LpxC family. It depends on Zn(2+) as a cofactor.

It carries out the reaction a UDP-3-O-[(3R)-3-hydroxyacyl]-N-acetyl-alpha-D-glucosamine + H2O = a UDP-3-O-[(3R)-3-hydroxyacyl]-alpha-D-glucosamine + acetate. It participates in glycolipid biosynthesis; lipid IV(A) biosynthesis; lipid IV(A) from (3R)-3-hydroxytetradecanoyl-[acyl-carrier-protein] and UDP-N-acetyl-alpha-D-glucosamine: step 2/6. In terms of biological role, catalyzes the hydrolysis of UDP-3-O-myristoyl-N-acetylglucosamine to form UDP-3-O-myristoylglucosamine and acetate, the committed step in lipid A biosynthesis. The protein is UDP-3-O-acyl-N-acetylglucosamine deacetylase of Chlamydia muridarum (strain MoPn / Nigg).